The chain runs to 296 residues: 4-hydroxy-tetrahydrodipicolinate synthase (296 aa).

T50 is a binding site for pyruvate. The active-site Proton donor/acceptor is Y138. K166 functions as the Schiff-base intermediate with substrate in the catalytic mechanism. Residue I208 participates in pyruvate binding.

This sequence belongs to the DapA family. As to quaternary structure, homotetramer; dimer of dimers.

Its subcellular location is the cytoplasm. The catalysed reaction is L-aspartate 4-semialdehyde + pyruvate = (2S,4S)-4-hydroxy-2,3,4,5-tetrahydrodipicolinate + H2O + H(+). It participates in amino-acid biosynthesis; L-lysine biosynthesis via DAP pathway; (S)-tetrahydrodipicolinate from L-aspartate: step 3/4. Its function is as follows. Catalyzes the condensation of (S)-aspartate-beta-semialdehyde [(S)-ASA] and pyruvate to 4-hydroxy-tetrahydrodipicolinate (HTPA). This chain is 4-hydroxy-tetrahydrodipicolinate synthase, found in Thiobacillus denitrificans (strain ATCC 25259 / T1).